We begin with the raw amino-acid sequence, 446 residues long: Minor fimbrium tip subunit Mfa3 (446 aa).

Positions 1–20 are cleaved as a signal peptide; that stretch reads MMQLKKRYFALILLLFLWSG. The N-palmitoyl cysteine moiety is linked to residue cysteine 21. The S-diacylglycerol cysteine moiety is linked to residue cysteine 21. Positions 21-43 are excised as a propeptide; the sequence is CDRGVDPQPDPLQPDVYLLVNAR.

The protein belongs to the bacteroidetes fimbrillin superfamily. FimB/Mfa2 family. As to quaternary structure, component of the fimbrium tip. Minor fimbriae are composed of a structural subunit, most often Mfa1, and the accessory subunits Mfa3, Mfa4 and Mfa5. Fimbrium assembly occurs by linear, head-to-tail oligomerization of fimbrial subunits. This is mediated via insertion of a C-terminal beta-strand from one subunit into a groove in the N-terminal domain of the following subunit. Mfa3 is required for Mfa4 and Mfa5 insertion into the fimbrium.

The protein resides in the fimbrium. Its subcellular location is the cell outer membrane. Tip subunit of the minor fimbriae. These filamentous pili are attached to the cell surface; they mediate biofilm formation, adhesion onto host cells and onto other bacteria that are part of the oral microbiome. They play an important role in invasion of periodontal tissues and are recognized as major virulence factors. Fimbrium subunits from different strains have highly divergent sequences, and this correlates with pathogenicity. The protein is Minor fimbrium tip subunit Mfa3 (mfa3) of Porphyromonas gingivalis (strain ATCC 33277 / DSM 20709 / CIP 103683 / JCM 12257 / NCTC 11834 / 2561).